The chain runs to 343 residues: S-adenosylmethionine:tRNA ribosyltransferase-isomerase (343 aa).

The protein belongs to the QueA family. In terms of assembly, monomer.

The protein localises to the cytoplasm. It catalyses the reaction 7-aminomethyl-7-carbaguanosine(34) in tRNA + S-adenosyl-L-methionine = epoxyqueuosine(34) in tRNA + adenine + L-methionine + 2 H(+). Its pathway is tRNA modification; tRNA-queuosine biosynthesis. Its function is as follows. Transfers and isomerizes the ribose moiety from AdoMet to the 7-aminomethyl group of 7-deazaguanine (preQ1-tRNA) to give epoxyqueuosine (oQ-tRNA). The chain is S-adenosylmethionine:tRNA ribosyltransferase-isomerase from Dehalococcoides mccartyi (strain ATCC BAA-2100 / JCM 16839 / KCTC 5957 / BAV1).